Consider the following 1205-residue polypeptide: A disintegrin and metalloproteinase with thrombospondin motifs 3 (1205 aa).

The signal sequence occupies residues 1–20 (MVLLSLWLIAAALVEVRTSA). The propeptide occupies 21-249 (DGQAGNEEMV…QLNETMRRRR (229 aa)). N-linked (GlcNAc...) asparagine glycans are attached at residues N83, N119, N242, and N345. Residues 256–460 (YNIEVLLGVD…HSYDCLLDDP (205 aa)) form the Peptidase M12B domain. 3 cysteine pairs are disulfide-bonded: C333/C382, C376/C455, and C415/C441. H398 is a Zn(2+) binding site. The active site involves E399. Zn(2+) is bound by residues H402 and H408. The Disintegrin domain maps to 470–550 (ELPGINYSMD…MWKNANQQKQ (81 aa)). An N-linked (GlcNAc...) asparagine glycan is attached at N475. Cystine bridges form between C482/C507, C493/C516, C502/C535, C529/C540, C563/C600, C567/C605, and C578/C590. One can recognise a TSP type-1 1 domain in the interval 551–606 (DGNWGSWTKFGSCSRTCGTGVRFRTRQCNNPMPINGGQDCPGVNFEYQLCNTEECQ). Residues 713 to 844 (RTVKGTFTRT…NSNNVIQEEL (132 aa)) form a spacer region. N814 carries N-linked (GlcNAc...) asparagine glycosylation. TSP type-1 domains follow at residues 845-905 (DTFE…QECT), 906-965 (HPLW…NRVP), and 966-1014 (CPAQ…QLPP). A glycan (N-linked (GlcNAc...) asparagine) is linked at N942. 3 disulfide bridges follow: C978–C1010, C982–C1015, and C993–C999. A PLAC domain is found at 1015–1054 (CNDEPCLGDKSIFCQMEVLARYCSIPGYNKLCCESCSKRS). The interval 1174-1205 (DSIGASSQARTSKKDGKIIDNRRPTRSSTLER) is disordered. Positions 1185-1205 (SKKDGKIIDNRRPTRSSTLER) are enriched in basic and acidic residues.

Zn(2+) serves as cofactor. In terms of processing, the precursor is cleaved by a furin endopeptidase. Post-translationally, glycosylated. Can be O-fucosylated by POFUT2 on a serine or a threonine residue found within the consensus sequence C1-X(2)-(S/T)-C2-G of the TSP type-1 repeat domains where C1 and C2 are the first and second cysteine residue of the repeat, respectively. Fucosylated repeats can then be further glycosylated by the addition of a beta-1,3-glucose residue by the glucosyltransferase, B3GALTL. Fucosylation mediates the efficient secretion of ADAMTS family members. Can also be C-glycosylated with one or two mannose molecules on tryptophan residues within the consensus sequence W-X-X-W of the TPRs, and N-glycosylated. These other glycosylations can also facilitate secretion. Found in cartilage and skin.

The protein resides in the secreted. It is found in the extracellular space. Its subcellular location is the extracellular matrix. Cleaves the propeptides of type II collagen prior to fibril assembly. Does not act on types I and III collagens. In Homo sapiens (Human), this protein is A disintegrin and metalloproteinase with thrombospondin motifs 3 (ADAMTS3).